The following is a 78-amino-acid chain: Mu-conotoxin BuIIIB (78 aa).

Positions methionine 1–proline 22 are cleaved as a signal peptide. Residues glutamine 23–arginine 51 constitute a propeptide that is removed on maturation. The interval aspartate 26–proline 46 is disordered. The segment covering proline 28–aspartate 38 has biased composition (basic and acidic residues). Intrachain disulfides connect cysteine 56–cysteine 68, cysteine 57–cysteine 74, and cysteine 64–cysteine 75. Cysteine amide is present on cysteine 75.

This sequence belongs to the conotoxin M superfamily. In terms of tissue distribution, expressed by the venom duct.

The protein resides in the secreted. Mu-conotoxins block voltage-gated sodium channels (Nav). This synthetic toxin potently blocks rNav1.4/SCN4A (Kd=0.34-3.6 nM), rNav1.2/SCN2A (Kd=13 nM), rNav1.3/SCN3A (Kd=200 nM), rNav1.1/SCN1A (Kd=360 nM), mNav1.6/SCN8A (IC(50)=1.8 uM), rNav1.5/SCN5A (IC(50)=9 uM), rNav1.6/SCN8A (IC(50)&gt;30 uM). It is noteworthy that the toxin is 50-fold more potent on mouse Nav1.6 than on rat Nav1.6. The block of SCN4A is very slowly reversible. The chain is Mu-conotoxin BuIIIB from Conus bullatus (Bubble cone).